Here is a 255-residue protein sequence, read N- to C-terminus: uncharacterized protein (255 aa).

The 69-residue stretch at 4 to 72 (DPYSVLGVEK…KRRKHYDKTG (69 aa)) folds into the J domain. Basic residues-rich tracts occupy residues 167–178 (FAPNEKKRKRRA) and 243–255 (TKPK…RSKE). Disordered stretches follow at residues 167 to 215 (FAPN…EEAL) and 230 to 255 (LISN…RSKE).

This sequence belongs to the DnaJ family.

It localises to the nucleus. It is found in the nucleolus. This is an uncharacterized protein from Schizosaccharomyces pombe (strain 972 / ATCC 24843) (Fission yeast).